Here is a 176-residue protein sequence, read N- to C-terminus: Cytochrome b (176 aa).

The next 3 membrane-spanning stretches (helical) occupy residues 33–53, 77–98, and 113–133; these read FGSL…FLAM, WVLR…YLHV, and WNVG…GYVL. 2 residues coordinate heme b: H83 and H97.

The protein belongs to the cytochrome b family. As to quaternary structure, the cytochrome bc1 complex contains 11 subunits: 3 respiratory subunits (MT-CYB, CYC1 and UQCRFS1), 2 core proteins (UQCRC1 and UQCRC2) and 6 low-molecular weight proteins (UQCRH/QCR6, UQCRB/QCR7, UQCRQ/QCR8, UQCR10/QCR9, UQCR11/QCR10 and a cleavage product of UQCRFS1). This cytochrome bc1 complex then forms a dimer. The cofactor is heme b.

Its subcellular location is the mitochondrion inner membrane. In terms of biological role, component of the ubiquinol-cytochrome c reductase complex (complex III or cytochrome b-c1 complex) that is part of the mitochondrial respiratory chain. The b-c1 complex mediates electron transfer from ubiquinol to cytochrome c. Contributes to the generation of a proton gradient across the mitochondrial membrane that is then used for ATP synthesis. This is Cytochrome b (MT-CYB) from Corynorhinus rafinesquii (Rafinesque's big-eared bat).